The following is a 259-amino-acid chain: Global transcriptional regulator CodY (259 aa).

Residues 1–155 (MNLLQKTRKI…GATVVGMEIL (155 aa)) are GAF domain. Positions 203–222 (ASKIADRVGITRSVIVNALR) form a DNA-binding region, H-T-H motif. The residue at position 215 (serine 215) is a Phosphoserine.

It belongs to the CodY family.

It is found in the cytoplasm. Its function is as follows. DNA-binding global transcriptional regulator which is involved in the adaptive response to starvation and acts by directly or indirectly controlling the expression of numerous genes in response to nutrient availability. During rapid exponential growth, CodY is highly active and represses genes whose products allow adaptation to nutrient depletion. This Geobacillus sp. (strain WCH70) protein is Global transcriptional regulator CodY.